We begin with the raw amino-acid sequence, 434 residues long: MAMQKIFAREILDSRGNPTVEVDLHTAKGRFRAAVPSGASTGIYEALELRDGDKSRYLGKGVLKAVEHINKTLGPALLEKKLSVVDQEKVDKFMIELDGTENKSKFGANAILGVSLAVCKAGAAEKGVPLYRHIADLAGNPELILPVPAFNVINGGSHAGNKLAMQEFMILPVGASSFREAMRIGAEVYHHLKGVIKAKYGKDATNVGDEGGFAPNILENNEALELLKTAIQAAGYPDKVVIGMDVAASEFYRNGKYDLDFKSPDDPARHISGEKLGELYKNFIKNYPVVSIEDPFDQDDWATWTSFLSGVNIQIVGDDLTVTNPKRIAQAVEKKACNCLLLKVNQIGSVTESIQACKLAQSNGWGVMVSHRSGETEDTFIADLVVGLCTGQIKTGAPCRSERLAKYNQLMRIEEALGDKAVFAGRKFRNPKAK.

At Ala-2 the chain carries N-acetylalanine. Phosphothreonine is present on Thr-72. Residues Ser-83 and Ser-157 each carry the phosphoserine modification. Positions 158 and 167 each coordinate substrate. Ser-176 bears the Phosphoserine mark. Thr-205 is modified (phosphothreonine). Glu-210 functions as the Proton donor in the catalytic mechanism. Position 229 is a phosphothreonine (Thr-229). Tyr-236 is modified (phosphotyrosine). Asp-245 is a Mg(2+) binding site. A Phosphoserine modification is found at Ser-263. Substrate-binding residues include Glu-293 and Asp-318. Mg(2+) contacts are provided by Glu-293 and Asp-318. Lys-343 (proton acceptor) is an active-site residue. Residues 370-373 (SHRS) and Lys-394 each bind substrate.

Belongs to the enolase family. As to quaternary structure, mammalian enolase is composed of 3 isozyme subunits, alpha, beta and gamma, which can form homodimers or heterodimers which are cell-type and development-specific. Interacts with PNKD. Mg(2+) is required as a cofactor.

Its subcellular location is the cytoplasm. The catalysed reaction is (2R)-2-phosphoglycerate = phosphoenolpyruvate + H2O. It participates in carbohydrate degradation; glycolysis; pyruvate from D-glyceraldehyde 3-phosphate: step 4/5. In terms of biological role, glycolytic enzyme that catalyzes the conversion of 2-phosphoglycerate to phosphoenolpyruvate. Appears to have a function in striated muscle development and regeneration. This Bos taurus (Bovine) protein is Beta-enolase (ENO3).